The sequence spans 529 residues: MTQDHIVTERPPATRNDTAGNATARTYEVRTLGCLMNAHDSERMAGLLEDAGYIKADPGAPADLVVFNTCAVRENADNKLYGSLAHLAPIKASRPGMQIAVGGCLAQKDRHIVLDRAPWVDVVFGTHNIGSLPVLLERSRHNQDAQVEILESLRTFPSALPAARDSAYAAWVSISVGCNNSCTFCIVPSLRGKEADRRPGDILAEVQALVEQGVLEVTLLGQNVNSYGVNFADPDPSTGEEPLPRDRGAFAQLLRACGRIEGLERIRFTSPHPAEFTDDVILAMAETPAVCPHLHMPLQSGSDQILKAMRRSYRRDRYLGIIDKVRAAIPHAAITTDIIVGFPGETEHDFEQTLDVVQKARFTSAFTFQYSPRPGTPAADMPDQIPKNVVQQRFERLVALQERISLESNRSLVGTRQELLVVAGEGRKNATTARISGRARDGRLVHFRPDSADGSVRPGDLVDVEITDAAPHHLIADGPLLQHRRTPAGDASERGQTPTTRGVGLGVPRITVAQAQIPSSGTHPDTACR.

Positions 1 to 21 (MTQDHIVTERPPATRNDTAGN) are disordered. In terms of domain architecture, MTTase N-terminal spans 25-141 (RTYEVRTLGC…LPVLLERSRH (117 aa)). 6 residues coordinate [4Fe-4S] cluster: Cys-34, Cys-70, Cys-104, Cys-178, Cys-182, and Cys-185. Residues 164 to 407 (RDSAYAAWVS…VALQERISLE (244 aa)) form the Radical SAM core domain. A TRAM domain is found at 410-480 (RSLVGTRQEL…PHHLIADGPL (71 aa)). Positions 481–504 (LQHRRTPAGDASERGQTPTTRGVG) are disordered.

This sequence belongs to the methylthiotransferase family. MiaB subfamily. Monomer. The cofactor is [4Fe-4S] cluster.

It is found in the cytoplasm. The enzyme catalyses N(6)-dimethylallyladenosine(37) in tRNA + (sulfur carrier)-SH + AH2 + 2 S-adenosyl-L-methionine = 2-methylsulfanyl-N(6)-dimethylallyladenosine(37) in tRNA + (sulfur carrier)-H + 5'-deoxyadenosine + L-methionine + A + S-adenosyl-L-homocysteine + 2 H(+). Its function is as follows. Catalyzes the methylthiolation of N6-(dimethylallyl)adenosine (i(6)A), leading to the formation of 2-methylthio-N6-(dimethylallyl)adenosine (ms(2)i(6)A) at position 37 in tRNAs that read codons beginning with uridine. The polypeptide is tRNA-2-methylthio-N(6)-dimethylallyladenosine synthase 1 (Mycobacterium marinum (strain ATCC BAA-535 / M)).